A 315-amino-acid chain; its full sequence is Microtubule-associated protein Jupiter (315 aa).

The segment covering M1 to S14 has biased composition (polar residues). Disordered stretches follow at residues M1–R37 and E51–N89. Residue S24 is modified to Phosphoserine. T35 is subject to Phosphothreonine. The span at A62–L76 shows a compositional bias: basic and acidic residues. Phosphothreonine is present on residues T81 and T85. S94, S122, and S133 each carry phosphoserine. Disordered regions lie at residues Y116–A166 and E272–W315. Over residues S120 to S133 the composition is skewed to low complexity. Composition is skewed to polar residues over residues T134–R148 and D285–G296.

The protein belongs to the MAP Jupiter family.

Its subcellular location is the nucleus. The protein resides in the cytoplasm. It localises to the cytoskeleton. The protein localises to the spindle. Functionally, binds to all microtubule populations. This Drosophila sechellia (Fruit fly) protein is Microtubule-associated protein Jupiter.